The chain runs to 1068 residues: Phosphatidylinositol 4,5-bisphosphate 3-kinase catalytic subunit alpha isoform (1068 aa).

Positions 16 to 105 constitute a PI3K-ABD domain; it reads MPPRILVECL…QPFLKVIEPV (90 aa). A PI3K-RBD domain is found at 187–289; the sequence is KGQIIVVIWV…GRMPNLMLMA (103 aa). The 158-residue stretch at 330–487 folds into the C2 PI3K-type domain; sequence INSALRIKIL…DWFSSVVKFP (158 aa). Positions 517 to 694 constitute a PIK helical domain; it reads LARDNELREN…GLLLESYCRA (178 aa). In terms of domain architecture, PI3K/PI4K catalytic spans 765-1051; the sequence is RLEECRIMSS…QMNDAHHGGW (287 aa). Residues 771 to 777 form a G-loop region; sequence IMSSAKR. The tract at residues 912–920 is catalytic loop; it reads GIGDRHNSN. The segment at 931 to 957 is activation loop; the sequence is HIDFGHFLDHKKKKFGYKRERVPFVLT.

The protein belongs to the PI3/PI4-kinase family. In terms of assembly, heterodimer of a catalytic subunit PIK3CA and a p85 regulatory subunit (PIK3R1, PIK3R2 or PIK3R3). Interacts with IRS1 in nuclear extracts. Interacts with RUFY3. Interacts with RASD2. Interacts with APPL1. Interacts with HRAS and KRAS. Interaction with HRAS/KRAS is required for PI3K pathway signaling and cell proliferation stimulated by EGF and FGF2. Interacts with FAM83B; activates the PI3K/AKT signaling cascade.

It catalyses the reaction a 1,2-diacyl-sn-glycero-3-phospho-(1D-myo-inositol-4,5-bisphosphate) + ATP = a 1,2-diacyl-sn-glycero-3-phospho-(1D-myo-inositol-3,4,5-trisphosphate) + ADP + H(+). It carries out the reaction a 1,2-diacyl-sn-glycero-3-phospho-(1D-myo-inositol) + ATP = a 1,2-diacyl-sn-glycero-3-phospho-(1D-myo-inositol-3-phosphate) + ADP + H(+). The enzyme catalyses L-seryl-[protein] + ATP = O-phospho-L-seryl-[protein] + ADP + H(+). The catalysed reaction is 1,2-dioctanoyl-sn-glycero-3-phospho-(1D-myo-inositol-4,5-bisphosphate) + ATP = 1,2-dioctanoyl-sn-glycero-3-phospho-(1D-myo-inositol-3,4,5-trisphosphate) + ADP + H(+). It catalyses the reaction 1-octadecanoyl-2-(5Z,8Z,11Z,14Z)-eicosatetraenoyl-sn-glycero-3-phospho-1D-myo-inositol 4,5-bisphosphate + ATP = 1-octadecanoyl-2-(5Z,8Z,11Z,14Z-eicosatetraenoyl)-sn-glycero-3-phospho-(1D-myo-inositol 3,4,5-triphosphate) + ADP + H(+). It participates in phospholipid metabolism; phosphatidylinositol phosphate biosynthesis. In terms of biological role, phosphoinositide-3-kinase (PI3K) phosphorylates phosphatidylinositol (PI) and its phosphorylated derivatives at position 3 of the inositol ring to produce 3-phosphoinositides. Uses ATP and PtdIns(4,5)P2 (phosphatidylinositol 4,5-bisphosphate) to generate phosphatidylinositol 3,4,5-trisphosphate (PIP3). PIP3 plays a key role by recruiting PH domain-containing proteins to the membrane, including AKT1 and PDPK1, activating signaling cascades involved in cell growth, survival, proliferation, motility and morphology. Participates in cellular signaling in response to various growth factors. Involved in the activation of AKT1 upon stimulation by receptor tyrosine kinases ligands such as EGF, insulin, IGF1, VEGFA and PDGF. Involved in signaling via insulin-receptor substrate (IRS) proteins. Essential in endothelial cell migration during vascular development through VEGFA signaling, possibly by regulating RhoA activity. Required for lymphatic vasculature development, possibly by binding to RAS and by activation by EGF and FGF2, but not by PDGF. Regulates invadopodia formation through the PDPK1-AKT1 pathway. Participates in cardiomyogenesis in embryonic stem cells through a AKT1 pathway. Participates in vasculogenesis in embryonic stem cells through PDK1 and protein kinase C pathway. Also has serine-protein kinase activity: phosphorylates PIK3R1 (p85alpha regulatory subunit), EIF4EBP1 and HRAS. Plays a role in the positive regulation of phagocytosis and pinocytosis. In Mus musculus (Mouse), this protein is Phosphatidylinositol 4,5-bisphosphate 3-kinase catalytic subunit alpha isoform (Pik3ca).